The sequence spans 312 residues: MLQYQIERIDHQIADDRSQTGTFLIGPLERGQATTLGNSLRRVLMGGLEGSAVTAVRIAGINHEYATIPGVREDVLDILLNCKQLSINSTNPELEIGRLVASGPMEVKANDIQFSSQVEIVDGEKPIATIQEGHNLELEIHVERGVGYRPVDRKSEETTAIDLLQIDAVFMPVKRVNFTIDETAVAEGGTGRERLKMEVVTDGSTSPDDAIAEAANQLIELFQPLATVTMVEEIPEEPEPSPEAQIPLEELNLSVRAYNCLKRAQVNSVSDLMGFSYEDLLEIKNFGSKSADEVIEALERIGISIPQSRTSV.

The tract at residues 1–229 is alpha N-terminal domain (alpha-NTD); the sequence is MLQYQIERID…ELFQPLATVT (229 aa). The alpha C-terminal domain (alpha-CTD) stretch occupies residues 240–312; the sequence is PSPEAQIPLE…ISIPQSRTSV (73 aa).

The protein belongs to the RNA polymerase alpha chain family. In cyanobacteria the RNAP catalytic core is composed of 2 alpha, 1 beta, 1 beta', 1 gamma and 1 omega subunit. When a sigma factor is associated with the core the holoenzyme is formed, which can initiate transcription.

It carries out the reaction RNA(n) + a ribonucleoside 5'-triphosphate = RNA(n+1) + diphosphate. Its function is as follows. DNA-dependent RNA polymerase catalyzes the transcription of DNA into RNA using the four ribonucleoside triphosphates as substrates. The polypeptide is DNA-directed RNA polymerase subunit alpha (Prochlorococcus marinus (strain MIT 9301)).